We begin with the raw amino-acid sequence, 196 residues long: Dual-action ribosomal maturation protein DarP (196 aa).

It belongs to the DarP family.

It localises to the cytoplasm. Its function is as follows. Member of a network of 50S ribosomal subunit biogenesis factors which assembles along the 30S-50S interface, preventing incorrect 23S rRNA structures from forming. Promotes peptidyl transferase center (PTC) maturation. The sequence is that of Dual-action ribosomal maturation protein DarP from Stenotrophomonas maltophilia (strain R551-3).